The chain runs to 472 residues: Flap endonuclease 1 (472 aa).

The N-domain stretch occupies residues 1-106 (MGIKGLARFL…EELMKRKERR (106 aa)). D34 serves as a coordination point for Mg(2+). 2 residues coordinate DNA: R47 and R72. Mg(2+) is bound by residues D88, E160, E162, D181, and D183. Residues 124-263 (TIRKQLIRTI…LTAYKLLKKH (140 aa)) form an I-domain region. E160 contacts DNA. DNA contacts are provided by G241 and D243. D243 provides a ligand contact to Mg(2+). Residues 348 to 356 (AQTSLDSFF) are interaction with PCNA.

This sequence belongs to the XPG/RAD2 endonuclease family. FEN1 subfamily. In terms of assembly, interacts with PCNA. Three molecules of FEN1 bind to one PCNA trimer with each molecule binding to one PCNA monomer. PCNA stimulates the nuclease activity without altering cleavage specificity. Mg(2+) serves as cofactor. Phosphorylated. Phosphorylation upon DNA damage induces relocalization to the nuclear plasma.

The protein resides in the nucleus. The protein localises to the nucleolus. It is found in the nucleoplasm. Its subcellular location is the mitochondrion. Its function is as follows. Structure-specific nuclease with 5'-flap endonuclease and 5'-3' exonuclease activities involved in DNA replication and repair. During DNA replication, cleaves the 5'-overhanging flap structure that is generated by displacement synthesis when DNA polymerase encounters the 5'-end of a downstream Okazaki fragment. It enters the flap from the 5'-end and then tracks to cleave the flap base, leaving a nick for ligation. Also involved in the long patch base excision repair (LP-BER) pathway, by cleaving within the apurinic/apyrimidinic (AP) site-terminated flap. Acts as a genome stabilization factor that prevents flaps from equilibrating into structures that lead to duplications and deletions. Also possesses 5'-3' exonuclease activity on nicked or gapped double-stranded DNA, and exhibits RNase H activity. Also involved in replication and repair of rDNA and in repairing mitochondrial DNA. The chain is Flap endonuclease 1 from Cryptosporidium muris (strain RN66).